The primary structure comprises 338 residues: Phosphate acyltransferase (338 aa).

This sequence belongs to the PlsX family. As to quaternary structure, homodimer. Probably interacts with PlsY.

It localises to the cytoplasm. The enzyme catalyses a fatty acyl-[ACP] + phosphate = an acyl phosphate + holo-[ACP]. Its pathway is lipid metabolism; phospholipid metabolism. Catalyzes the reversible formation of acyl-phosphate (acyl-PO(4)) from acyl-[acyl-carrier-protein] (acyl-ACP). This enzyme utilizes acyl-ACP as fatty acyl donor, but not acyl-CoA. This chain is Phosphate acyltransferase, found in Endomicrobium trichonymphae.